We begin with the raw amino-acid sequence, 259 residues long: Leucine-rich repeat-containing protein 3B (259 aa).

Residues 1–33 (MNLVDLWLTRSLSMCLLLQSFVLMILCFHSASM) form the signal peptide. The 31-residue stretch at 34-64 (CPKGCLCSSSGGLNVTCSNANLKEIPRDLPP) folds into the LRRNT domain. Asn-47 carries an N-linked (GlcNAc...) asparagine glycan. LRR repeat units lie at residues 65–86 (ETVL…IFKD), 89–110 (QLRV…AFKG), and 114–135 (TLQT…AFNN). Asn-94 is a glycosylation site (N-linked (GlcNAc...) asparagine). One can recognise an LRRCT domain in the interval 145 to 197 (NPWHCDCTLQQVLRSMASNHETAHNVICKTSVLDEHAGRPFLNAANDADLCNL). A helical membrane pass occupies residues 205–225 (AMLVTMFGWFTMVISYVVYYV).

The protein belongs to the LRRC3 family.

Its subcellular location is the membrane. This chain is Leucine-rich repeat-containing protein 3B (LRRC3B), found in Homo sapiens (Human).